Reading from the N-terminus, the 73-residue chain is Neutrophil elastase 2B (73 aa).

Residues 1-73 (IVGGRPARPH…SGGPLVCNGL (73 aa)) form the Peptidase S1 domain. The active-site Charge relay system is the serine 64.

It belongs to the peptidase S1 family. Elastase subfamily.

Its function is as follows. May be involved in the degradation of connective tissue in chronic lung disease. The chain is Neutrophil elastase 2B from Equus caballus (Horse).